We begin with the raw amino-acid sequence, 107 residues long: Large ribosomal subunit protein uL24 (107 aa).

This sequence belongs to the universal ribosomal protein uL24 family. Part of the 50S ribosomal subunit.

In terms of biological role, one of two assembly initiator proteins, it binds directly to the 5'-end of the 23S rRNA, where it nucleates assembly of the 50S subunit. Functionally, one of the proteins that surrounds the polypeptide exit tunnel on the outside of the subunit. This Thermotoga neapolitana (strain ATCC 49049 / DSM 4359 / NBRC 107923 / NS-E) protein is Large ribosomal subunit protein uL24.